The sequence spans 395 residues: Guanine nucleotide-binding protein subunit beta-5b (395 aa).

7 WD repeats span residues 103–142 (GHGNKVLCMDWCRDKRRIVSSSQDGKVIVWDAYTTNKEHA), 145–184 (MPCTWVMACAYAPSGCAVACGGLDNKCSVYPLSLDKNENL), 193–234 (MHTN…QSFH), 235–276 (GHSA…NVQS), 279–318 (THDSDINSVKYYPSGDAFASGSDDATCRLYDLRADREVAI), 320–362 (SKDS…RVAI), and 365–395 (GHENRVSTVRVSPDGTAFCSGSWDNTLRIWA).

This sequence belongs to the WD repeat G protein beta family. As to quaternary structure, may interact with RGS9; this interaction stabilizes both proteins and increases RGS9 GTPase-activating protein (GAP) activity, hence accelerating the deactivation of D(2) dopamine receptor-mediated signaling.

It is found in the membrane. Functionally, enhances GTPase-activating protein (GAP) activity of regulator of G protein signaling (RGS) proteins, such as RGS7 and RGS9, hence involved in the termination of the signaling initiated by the G protein coupled receptors (GPCRs) by accelerating the GTP hydrolysis on the G-alpha subunits, thereby promoting their inactivation. Increases RGS7 GTPase-activating protein (GAP) activity, thereby regulating mood and cognition. Increases RGS9 GTPase-activating protein (GAP) activity, hence contributes to the deactivation of G protein signaling initiated by D(2) dopamine receptors. Along with gnb5a, plays an important role in neuronal signaling, including in the parasympathetic, but not sympathetic, control of heart rate. This Danio rerio (Zebrafish) protein is Guanine nucleotide-binding protein subunit beta-5b.